A 723-amino-acid polypeptide reads, in one-letter code: MQEVKCLTLKDLLGVRTLVNKTGSDDAASMNDHKENICMDRRKMTPLKSESLTAALNGHGKISSPEITHITPIKLTEKAHPDPWTPTANLKMLINAASPDIRDREMKKTLFKPIENKGKIAEEEEEEELDDSCQYEALDESERRPSRKQKSLGLLCQKFLALYPDYPESSESINISLDEVATCLGVERRRIYDIVNVLESLMLVSRKAKNMYVWHGRSRLPQTLQGLLQAGRDQHYDLLMDQREGNGLHAVQHVQNAHAASSRRKDKSLRIMSQKFVMLFLVSKTQTVTLDMAAKILIEEGQEESYDSKYKTKVRRLYDIANVLTSLNLIKKIHMREEKTRKPVFKWIGPGNFQSSSNSDDLRGQISNSGTERREKMARHSSFQVITAPPVNQRLISSAPSTPHRYSTDEPVDYSRKSGNNSAVCRLQFGDGVHPSVSPAVPSALASLAMPLQADLMPVPASFSHPLAILPQTPLLMLYSGNISDGASSLRKRERSEEDDHQTTKCRRRSASIESDTVESESLSSSTRRSPVCSPEGSPWDEASFGGLHEDDVAASSSKDALLSPHYLYVPNTAGLNSFNFLLPAGHAQGGVPAVAMPYFVVQSPLIAGAMPTSSTEGAAGFSVPTVLSPAQFVMAGGAYGVTEILQSPEHHGNVPATTSSPRAEESPKPAQTQTPVTPKEASLGSKSFFETPGAFGSLVNQSAARKRGSAQRRLDIGHTAAN.

A disordered region spans residues 121–146 (AEEEEEEELDDSCQYEALDESERRPS). Positions 122–139 (EEEEEEELDDSCQYEALD) are enriched in acidic residues. 2 DNA-binding regions span residues 147–216 (RKQK…VWHG) and 264–349 (RKDK…KWIG). 2 stretches are compositionally biased toward polar residues: residues 356–370 (SSNS…SNSG) and 395–405 (LISSAPSTPHR). Disordered regions lie at residues 356-379 (SSNS…KMAR), 395-417 (LISS…YSRK), 489-546 (SLRK…ASFG), 650-689 (EHHG…SKSF), and 702-723 (QSAA…TAAN). Residues 494–503 (ERSEEDDHQT) show a composition bias toward basic and acidic residues. The segment covering 520-535 (SESLSSSTRRSPVCSP) has biased composition (low complexity).

It belongs to the E2F/DP family. Homodimer and heterodimer: mainly forms homodimers and, to a lesser extent, heterodimers with e2f8.

The protein resides in the nucleus. Functionally, atypical E2F transcription factor that participates in various processes such as angiogenesis and polyploidization of specialized cells. Mainly acts as a transcription repressor that binds DNA independently of DP proteins and specifically recognizes the E2 recognition site 5'-TTTC[CG]CGC-3'. Directly represses transcription of classical E2F transcription factors such as e2f1. Acts as a regulator of S-phase by recognizing and binding the E2-related site 5'-TTCCCGCC-3' and mediating repression of G1/S-regulated genes. Acts as a promoter of sprouting angiogenesis, possibly by acting as a transcription activator and promoting expression of vegfa. This chain is Transcription factor E2F7 (e2f7), found in Danio rerio (Zebrafish).